The primary structure comprises 567 residues: PHD finger protein 1 (567 aa).

The segment at 1–31 is disordered; sequence MAQPPRLSRSGASSLWDPASPAPTSGPRPRL. Residues 29-86 form the Tudor domain; that stretch reads PRLWEGQDVLARWTDGLLYLGTIKKVDSAREVCLVQFEDDSQFLVLWKDISPAALPGE. 2 consecutive PHD-type zinc fingers follow at residues 87-142 and 186-240; these read ELLC…CVFA and QSYC…CRGG. 2 disordered regions span residues 333 to 441 and 455 to 537; these read ARMP…TDAR and HPSA…GYLS. Gly360 carries the post-translational modification Phosphoserine. The span at 371-386 shows a compositional bias: basic and acidic residues; that stretch reads PEPEPLRRRQKGKVEE. Ser420 carries the post-translational modification Phosphoserine. Low complexity-rich tracts occupy residues 423-433, 456-470, and 488-510; these read PNQSYQGSSGY, PSASTAGTSGDSGPP, and SAPHSMTASSSSVSSPSPGLPRR. Positions 524–534 are enriched in gly residues; that stretch reads GTGGGVRGGVG.

It belongs to the Polycomblike family. Interacts with CHMP1. Associated component of the PRC2 complex. Interacts with p53/TP53. As to expression, highest levels in heart, skeletal muscle, and pancreas, lower levels in brain, placenta, lung, liver and kidney.

The protein localises to the nucleus. The protein resides in the cytoplasm. Its subcellular location is the cytoskeleton. It is found in the microtubule organizing center. It localises to the centrosome. Functionally, polycomb group (PcG) that specifically binds histone H3 trimethylated at 'Lys-36' (H3K36me3) and recruits the PRC2 complex. Involved in DNA damage response and is recruited at double-strand breaks (DSBs). Acts by binding to H3K36me3, a mark for transcriptional activation, and recruiting the PRC2 complex: it is however unclear whether recruitment of the PRC2 complex to H3K36me3 leads to enhance or inhibit H3K27me3 methylation mediated by the PRC2 complex. According to some reports, PRC2 recruitment by PHF1 promotes H3K27me3 and subsequent gene silencing by inducing spreading of PRC2 and H3K27me3 into H3K36me3 loci. According to another report, PHF1 recruits the PRC2 complex at double-strand breaks (DSBs) and inhibits the activity of PRC2. Regulates p53/TP53 stability and prolonges its turnover: may act by specifically binding to a methylated from of p53/TP53. The chain is PHD finger protein 1 (PHF1) from Homo sapiens (Human).